Here is a 1088-residue protein sequence, read N- to C-terminus: DNA mismatch repair protein MutS (1088 aa).

Residues 498–579 are disordered; that stretch reads PLDGITPPDD…SFEMPSLHGH (82 aa). The span at 537–546 shows a compositional bias: acidic residues; the sequence is DLFDEEEEQE. An ATP-binding site is contributed by 816-823; the sequence is GPNMSGKS. The interval 1000–1048 is disordered; it reads LERRAPRSTPQPAPERTEERPAAGRPTARSHSAARGDPPRAPDGQLSLF.

Belongs to the DNA mismatch repair MutS family.

Functionally, this protein is involved in the repair of mismatches in DNA. It is possible that it carries out the mismatch recognition step. This protein has a weak ATPase activity. The protein is DNA mismatch repair protein MutS of Roseiflexus castenholzii (strain DSM 13941 / HLO8).